The chain runs to 235 residues: Carboxymethylenebutenolidase 2 (235 aa).

Residues Cys-117, Asp-173, and His-204 contribute to the active site.

This sequence belongs to the dienelactone hydrolase family. In terms of assembly, monomer.

It carries out the reaction 2-(5-oxo-2,5-dihydrofuran-2-ylidene)acetate + H2O = 4-oxohex-2-enedioate + H(+). It participates in aromatic compound metabolism; 3-chlorocatechol degradation. In terms of biological role, ring cleavage of cyclic ester dienelactone to produce maleylacetate. The polypeptide is Carboxymethylenebutenolidase 2 (tfdEII) (Cupriavidus pinatubonensis (strain JMP 134 / LMG 1197) (Cupriavidus necator (strain JMP 134))).